A 119-amino-acid chain; its full sequence is Large ribosomal subunit protein uL22c (119 aa).

The protein belongs to the universal ribosomal protein uL22 family. Part of the 50S ribosomal subunit.

It is found in the plastid. Its subcellular location is the chloroplast. Functionally, this protein binds specifically to 23S rRNA. In terms of biological role, the globular domain of the protein is located near the polypeptide exit tunnel on the outside of the subunit, while an extended beta-hairpin is found that lines the wall of the exit tunnel in the center of the 70S ribosome. This chain is Large ribosomal subunit protein uL22c (rpl22), found in Anthoceros angustus (Hornwort).